The primary structure comprises 149 residues: Alpha-crystallin A chain (149 aa).

Residues Leu28 to Ser138 form the sHSP domain. Zn(2+) is bound by residues His55, His76, Glu78, His83, His91, and His130. The disordered stretch occupies residues Asn125–Ser149. Basic and acidic residues predominate over residues His130–Pro143. A glycan (O-linked (GlcNAc) serine) is linked at Ser138.

This sequence belongs to the small heat shock protein (HSP20) family. In terms of assembly, heteropolymer composed of three CRYAA and one CRYAB subunits. Inter-subunit bridging via zinc ions enhances stability, which is crucial as there is no protein turn over in the lens. Can also form homodimers and homotetramers (dimers of dimers) which serve as the building blocks of homooligomers. Within homooligomers, the zinc-binding motif is created from residues of 3 different molecules. His-76 and Glu-78 from one molecule are ligands of the zinc ion, and His-83 and His-130 residues from additional molecules complete the site with tetrahedral coordination geometry.

It is found in the cytoplasm. The protein localises to the nucleus. In terms of biological role, contributes to the transparency and refractive index of the lens. May act as a chaperone, preventing aggregation of various proteins under a wide range of stress conditions. The protein is Alpha-crystallin A chain (CRYAA) of Rana temporaria (European common frog).